The primary structure comprises 339 residues: Sperm acrosome membrane-associated protein 6 (339 aa).

The signal sequence occupies residues 1 to 41 (MTSQRSLSSPQTRRPSVMGLISLVGSIVLLFLLIFRASTWA). The CXXC motif motif lies at 42 to 45 (CLFC). 6 disulfides stabilise this stretch: cysteine 42-cysteine 155, cysteine 45-cysteine 158, cysteine 56-cysteine 70, cysteine 140-cysteine 163, cysteine 144-cysteine 169, and cysteine 186-cysteine 241. Over 42–310 (CLFCFTTYEE…NPQALTLGNL (269 aa)) the chain is Extracellular. Residues 155–158 (CSGC) carry the CXXC motif motif. Residues 166 to 251 (PLDCPVQDML…VILHDQRPLA (86 aa)) form the Ig-like domain. Asparagine 258 carries an N-linked (GlcNAc...) asparagine glycan. The chain crosses the membrane as a helical span at residues 311–331 (FLLAATAALGSASVTLLVWLF). Over 332 to 339 (FRWYLSGN) the chain is Cytoplasmic.

The protein belongs to the SPACA6 family. In terms of assembly, forms a complex with IZUMO1 and TMEM81 on spermatocyte cell membrane required for fertilization. In terms of tissue distribution, highly expressed in testis. Minor expression also detected in epididymis, seminal vesicle and ovary. Predominantly expressed in testicular germ cells during spermiogenesis. Most abundant in round spermatids and detected at lower levels in elongating spermatids.

It localises to the cytoplasmic vesicle. The protein resides in the secretory vesicle. The protein localises to the acrosome membrane. In terms of biological role, sperm protein required for fusion of sperm with the egg membrane during fertilization. May regulate the expression of sperm surface protein DCST2. This is Sperm acrosome membrane-associated protein 6 from Mus musculus (Mouse).